Reading from the N-terminus, the 354-residue chain is Inactive ADP-ribosyltransferase ARH2 (354 aa).

Residue S27 is modified to Phosphoserine.

It belongs to the ADP-ribosylglycohydrolase family.

Its subcellular location is the cytoplasm. The protein resides in the myofibril. The protein localises to the sarcomere. Its function is as follows. Required for myofibril assembly and outgrowth of the cardiac chambers in the developing heart. Appears to be catalytically inactive, showing no activity against O-acetyl-ADP-ribose. This chain is Inactive ADP-ribosyltransferase ARH2 (ADPRHL1), found in Bos taurus (Bovine).